A 1390-amino-acid polypeptide reads, in one-letter code: DNA-directed RNA polymerase subunit beta (1390 aa).

It belongs to the RNA polymerase beta chain family. The RNAP catalytic core consists of 2 alpha, 1 beta, 1 beta' and 1 omega subunit. When a sigma factor is associated with the core the holoenzyme is formed, which can initiate transcription.

The enzyme catalyses RNA(n) + a ribonucleoside 5'-triphosphate = RNA(n+1) + diphosphate. DNA-dependent RNA polymerase catalyzes the transcription of DNA into RNA using the four ribonucleoside triphosphates as substrates. This chain is DNA-directed RNA polymerase subunit beta, found in Mycoplasma genitalium (strain ATCC 33530 / DSM 19775 / NCTC 10195 / G37) (Mycoplasmoides genitalium).